We begin with the raw amino-acid sequence, 177 residues long: Probable inosine/xanthosine triphosphatase (177 aa).

The protein belongs to the YjjX NTPase family. In terms of assembly, homodimer. Requires Mg(2+) as cofactor. Mn(2+) serves as cofactor.

The catalysed reaction is XTP + H2O = XDP + phosphate + H(+). It catalyses the reaction ITP + H2O = IDP + phosphate + H(+). Phosphatase that hydrolyzes non-canonical purine nucleotides such as XTP and ITP to their respective diphosphate derivatives. Probably excludes non-canonical purines from DNA/RNA precursor pool, thus preventing their incorporation into DNA/RNA and avoiding chromosomal lesions. This is Probable inosine/xanthosine triphosphatase from Halalkalibacterium halodurans (strain ATCC BAA-125 / DSM 18197 / FERM 7344 / JCM 9153 / C-125) (Bacillus halodurans).